Consider the following 345-residue polypeptide: Biotin synthase (345 aa).

The Radical SAM core domain maps to 59–286 (NEVQLSTLLS…TTMVRLSAGR (228 aa)). Residues Cys74, Cys78, and Cys81 each coordinate [4Fe-4S] cluster. [2Fe-2S] cluster contacts are provided by Cys118, Cys149, Cys209, and Arg281.

This sequence belongs to the radical SAM superfamily. Biotin synthase family. As to quaternary structure, homodimer. [4Fe-4S] cluster serves as cofactor. The cofactor is [2Fe-2S] cluster.

The catalysed reaction is (4R,5S)-dethiobiotin + (sulfur carrier)-SH + 2 reduced [2Fe-2S]-[ferredoxin] + 2 S-adenosyl-L-methionine = (sulfur carrier)-H + biotin + 2 5'-deoxyadenosine + 2 L-methionine + 2 oxidized [2Fe-2S]-[ferredoxin]. The protein operates within cofactor biosynthesis; biotin biosynthesis; biotin from 7,8-diaminononanoate: step 2/2. Functionally, catalyzes the conversion of dethiobiotin (DTB) to biotin by the insertion of a sulfur atom into dethiobiotin via a radical-based mechanism. This is Biotin synthase from Leptothrix cholodnii (strain ATCC 51168 / LMG 8142 / SP-6) (Leptothrix discophora (strain SP-6)).